A 185-amino-acid polypeptide reads, in one-letter code: Hypoxanthine/guanine phosphoribosyltransferase (185 aa).

Belongs to the purine/pyrimidine phosphoribosyltransferase family. Archaeal HPRT subfamily. In terms of assembly, homodimer.

Its subcellular location is the cytoplasm. It catalyses the reaction IMP + diphosphate = hypoxanthine + 5-phospho-alpha-D-ribose 1-diphosphate. The catalysed reaction is GMP + diphosphate = guanine + 5-phospho-alpha-D-ribose 1-diphosphate. Its pathway is purine metabolism; IMP biosynthesis via salvage pathway; IMP from hypoxanthine: step 1/1. In terms of biological role, catalyzes a salvage reaction resulting in the formation of IMP that is energically less costly than de novo synthesis. This Methanococcus maripaludis (strain DSM 14266 / JCM 13030 / NBRC 101832 / S2 / LL) protein is Hypoxanthine/guanine phosphoribosyltransferase (hpt).